The chain runs to 377 residues: Chaperone protein DnaJ (377 aa).

The region spanning 5–70 (DYYEILGVSK…QKRAAYDQYG (66 aa)) is the J domain. The CR-type zinc finger occupies 132-210 (GVTKEIRIPT…CHGHGRVEKT (79 aa)). The Zn(2+) site is built by cysteine 145, cysteine 148, cysteine 162, cysteine 165, cysteine 184, cysteine 187, cysteine 198, and cysteine 201. CXXCXGXG motif repeat units follow at residues 145–152 (CDVCHGSG), 162–169 (CPTCHGAG), 184–191 (CPHCQGRG), and 198–205 (CNKCHGHG).

It belongs to the DnaJ family. As to quaternary structure, homodimer. Zn(2+) serves as cofactor.

The protein localises to the cytoplasm. Functionally, participates actively in the response to hyperosmotic and heat shock by preventing the aggregation of stress-denatured proteins and by disaggregating proteins, also in an autonomous, DnaK-independent fashion. Unfolded proteins bind initially to DnaJ; upon interaction with the DnaJ-bound protein, DnaK hydrolyzes its bound ATP, resulting in the formation of a stable complex. GrpE releases ADP from DnaK; ATP binding to DnaK triggers the release of the substrate protein, thus completing the reaction cycle. Several rounds of ATP-dependent interactions between DnaJ, DnaK and GrpE are required for fully efficient folding. Also involved, together with DnaK and GrpE, in the DNA replication of plasmids through activation of initiation proteins. This is Chaperone protein DnaJ from Klebsiella pneumoniae (strain 342).